We begin with the raw amino-acid sequence, 199 residues long: Imidazole glycerol phosphate synthase subunit HisH 2 (199 aa).

Positions 1-199 (MIAVIDVSGN…NNFLSLESTC (199 aa)) constitute a Glutamine amidotransferase type-1 domain. The active-site Nucleophile is the C76. Catalysis depends on residues H177 and E179.

In terms of assembly, heterodimer of HisH and HisF.

The protein resides in the cytoplasm. It carries out the reaction 5-[(5-phospho-1-deoxy-D-ribulos-1-ylimino)methylamino]-1-(5-phospho-beta-D-ribosyl)imidazole-4-carboxamide + L-glutamine = D-erythro-1-(imidazol-4-yl)glycerol 3-phosphate + 5-amino-1-(5-phospho-beta-D-ribosyl)imidazole-4-carboxamide + L-glutamate + H(+). The catalysed reaction is L-glutamine + H2O = L-glutamate + NH4(+). Its pathway is amino-acid biosynthesis; L-histidine biosynthesis; L-histidine from 5-phospho-alpha-D-ribose 1-diphosphate: step 5/9. Functionally, IGPS catalyzes the conversion of PRFAR and glutamine to IGP, AICAR and glutamate. The HisH subunit provides the glutamine amidotransferase activity that produces the ammonia necessary to HisF for the synthesis of IGP and AICAR. This Legionella pneumophila subsp. pneumophila (strain Philadelphia 1 / ATCC 33152 / DSM 7513) protein is Imidazole glycerol phosphate synthase subunit HisH 2.